A 498-amino-acid chain; its full sequence is Zinc finger protein 497 (498 aa).

The segment at 30–104 is disordered; it reads SEGAVSGGWG…LRPSPLPEEP (75 aa). C2H2-type zinc fingers lie at residues 106–128, 134–156, 162–184, 190–212, 218–240, 246–268, 274–296, 302–324, 330–352, 358–380, 386–408, 414–436, 442–464, and 470–492; these read CRCGECGKAFSQGSYLLQHRRVH, YTCPECGKAFAWSSNLSQHQRIH, YACRECGKAFRAHSQLIHHQETH, FRCPDCGKSFGRSTTLVQHRRTH, YECPECGKAFSWNSNFLEHRRVH, HACRDCGKAFSQSSNLAEHLKIH, HACPDCGKAFVRVAGLRQHRRTH, FPCAECGKAFRESSQLLQHQRTH, FECAECGQAFVMGSYLAEHRRVH, HACAQCGKAFSQRSNLLSHRRTH, FACADCGKAFRGSSGLAHHRLSH, FACAECGKAFRGSSELRQHQRLH, FVCAHCSKAFVRKSELLSHRRTH, and YACGECGKPFSHRCNLNEHQKRH.

This sequence belongs to the krueppel C2H2-type zinc-finger protein family.

The protein resides in the nucleus. In terms of biological role, may be involved in transcriptional regulation. This chain is Zinc finger protein 497 (ZNF497), found in Homo sapiens (Human).